Consider the following 81-residue polypeptide: Lantipeptide prochlorosin 1.1 (81 aa).

Residues Met-1–Gly-65 constitute a propeptide that is removed on maturation. Residues Cys-68–Thr-72 constitute a cross-link (beta-methyllanthionine (Cys-Thr)). The segment at residues Thr-77–Cys-81 is a cross-link (beta-methyllanthionine (Thr-Cys)).

Post-translationally, cross-links are proved in vitro, when coepressed in E.coli with the ProcM lanthionine synthetase. In terms of processing, the beta-methyllanthionine residues have a DL configuration (with 2S,3S,6R stereochemistry). Maturation of prochlorosin involves the enzymatic conversion of Thr, and Ser into dehydrated AA and the formation of thioether bonds with cysteines. This is followed by membrane translocation and cleavage of the modified precursor.

Its subcellular location is the secreted. Functionally, lanthionine-containing peptide (lantipeptide) with unknown function. Does not show antibiotic activity against Lactococcus lactis 117 and Bacillus subtilis 6633 bacteria. Organisms that produce this peptide live in oligotrophic environments at very dilute concentrations, suggesting this peptide is not secreted to influence other bacteria. The protein is Lantipeptide prochlorosin 1.1 of Prochlorococcus marinus (strain MIT 9313).